A 258-amino-acid polypeptide reads, in one-letter code: NAD kinase (258 aa).

The active-site Proton acceptor is the Asp-44. Residues 44–45, 116–117, Asp-146, Ala-154, and 157–162 each bind NAD(+); these read DG, NE, and TAYNLS.

The protein belongs to the NAD kinase family. The cofactor is a divalent metal cation.

The protein localises to the cytoplasm. The enzyme catalyses NAD(+) + ATP = ADP + NADP(+) + H(+). Functionally, involved in the regulation of the intracellular balance of NAD and NADP, and is a key enzyme in the biosynthesis of NADP. Catalyzes specifically the phosphorylation on 2'-hydroxyl of the adenosine moiety of NAD to yield NADP. This chain is NAD kinase, found in Zymomonas mobilis subsp. mobilis (strain ATCC 31821 / ZM4 / CP4).